Reading from the N-terminus, the 369-residue chain is Virion membrane protein A16 homolog (369 aa).

The N-myristoyl glycine; by host moiety is linked to residue G2. The Virion surface portion of the chain corresponds to 2 to 330 (GQHVSNITVI…SYNKEAKLPS (329 aa)). The chain crosses the membrane as a helical span at residues 331–351 (FFSIIPVCIVLLCLFVLFYFL). Residues 352 to 369 (RIYDAKVINSNTINVYRK) lie on the Intravirion side of the membrane.

It belongs to the poxviridae A16/G9/J5 family. As to quaternary structure, part of a stable entry-fusion complex (EFC) which is at least composed of proteins A16, A21, A28, G3, G9, H2, J5, and L5. Formation of the viral membrane is necessary for the assembly of the complex. Interacts with G9. In terms of processing, most cysteines are linked by disulfide bonds. They are created by the viral disulfide bond formation pathway, a poxvirus-specific redox pathway that operates on the cytoplasmic side of the MV membranes.

Its subcellular location is the virion membrane. In terms of biological role, envelope protein part of the entry-fusion complex responsible for the virus membrane fusion with host cell membrane during virus entry. Also plays a role in cell-cell fusion (syncytium formation). The polypeptide is Virion membrane protein A16 homolog (Fowlpox virus (strain NVSL) (FPV)).